The sequence spans 355 residues: Protein RecA (355 aa).

ATP is bound at residue Gly67–Thr74.

It belongs to the RecA family.

The protein resides in the cytoplasm. In terms of biological role, can catalyze the hydrolysis of ATP in the presence of single-stranded DNA, the ATP-dependent uptake of single-stranded DNA by duplex DNA, and the ATP-dependent hybridization of homologous single-stranded DNAs. It interacts with LexA causing its activation and leading to its autocatalytic cleavage. The chain is Protein RecA from Histophilus somni (strain 129Pt) (Haemophilus somnus).